We begin with the raw amino-acid sequence, 210 residues long: Transmembrane protein 61 (210 aa).

2 helical membrane-spanning segments follow: residues Tyr-18–Trp-38 and Val-69–Val-89. A disordered region spans residues Val-140–Trp-172.

It localises to the membrane. The protein is Transmembrane protein 61 (TMEM61) of Homo sapiens (Human).